Consider the following 626-residue polypeptide: DNA mismatch repair protein MutL (626 aa).

A disordered region spans residues 352–399 (QPPSPSFTSRPSSAGYASGSWHPAVSSPRTEWSPQTAHPAHRPLDLGA). Polar residues predominate over residues 378–387 (SPRTEWSPQT).

The protein belongs to the DNA mismatch repair MutL/HexB family.

Functionally, this protein is involved in the repair of mismatches in DNA. It is required for dam-dependent methyl-directed DNA mismatch repair. May act as a 'molecular matchmaker', a protein that promotes the formation of a stable complex between two or more DNA-binding proteins in an ATP-dependent manner without itself being part of a final effector complex. The sequence is that of DNA mismatch repair protein MutL from Brucella anthropi (strain ATCC 49188 / DSM 6882 / CCUG 24695 / JCM 21032 / LMG 3331 / NBRC 15819 / NCTC 12168 / Alc 37) (Ochrobactrum anthropi).